We begin with the raw amino-acid sequence, 283 residues long: MDHLSLVPYEGGSAGGGGGGGKYKECMRNHAAAMGGQAFDGCGEYMPASPDSLKCAACGCHRSFHRRAAAGIGGGPVFFRPPPPPQPHSHHAALQGFLPSSVPAPAPPPQLALPYHAVPAAAWHHAAAAAAGRAGSETPPRMDDFGPGSAGGSGSGGGGIFGRKRFRTKFTPEQKERMREFAEKQGWRINRNDDGALDRFCVEIGVKRHVLKVWMHNHKNQLASSPTSAAAAAAGVMNPGAGIGLGTGLGTGISGDGDGDDDDTDDSPPRAAVSSPSPSPISV.

The ZF-HD dimerization-type; degenerate zinc-finger motif lies at 23–68 (YKECMRNHAAAMGGQAFDGCGEYMPASPDSLKCAACGCHRSFHRRA). Disordered regions lie at residues 131–171 (AGRA…TKFT) and 244–283 (GLGT…PISV). The span at 148-161 (GSAGGSGSGGGGIF) shows a compositional bias: gly residues. The segment at residues 163–226 (RKRFRTKFTP…NHKNQLASSP (64 aa)) is a DNA-binding region (homeobox). Positions 244–256 (GLGTGLGTGISGD) are enriched in gly residues. Residues 257–266 (GDGDDDDTDD) are compositionally biased toward acidic residues. The segment covering 269–283 (PRAAVSSPSPSPISV) has biased composition (low complexity).

Homo- and heterodimer with other ZFHD proteins.

Its subcellular location is the nucleus. In terms of biological role, putative transcription factor. This Oryza sativa subsp. japonica (Rice) protein is Zinc-finger homeodomain protein 8 (ZHD8).